Here is a 179-residue protein sequence, read N- to C-terminus: DELTA-actitoxin-Afr1e (179 aa).

Residues 1-29 are N-terminal alpha-helix that contributes to the pore; it reads SADVAGAVIDGAGLGFDVLKTVLEALGNV. The tract at residues 11 to 30 is N-terminal region; the sequence is GAGLGFDVLKTVLEALGNVK. R31 serves as a coordination point for an N-(acyl)-sphingosylphosphocholine. Positions 51 and 53 each coordinate N-acetyl-D-glucosamine 6-sulfate. Residues R53, S54, R79, G85, Y108, Y113, S114, W116, Y133, Y137, Y138, R144, and G168 each coordinate an N-(acyl)-sphingosylphosphocholine. A trp-rich region, which is important for the binding to lipid membrane region spans residues 105 to 120; that stretch reads SVPYDYNWYSNWWNVR. Y138 lines the N-acetyl-D-glucosamine 6-sulfate pocket. The Cell attachment site, crucial for protein stability signature appears at 144-146; that stretch reads RGD.

This sequence belongs to the actinoporin family. Sea anemone subfamily. As to quaternary structure, octamer or nonamer in membranes. Monomer in the soluble state.

It is found in the secreted. The protein resides in the nematocyst. Its subcellular location is the target cell membrane. Its function is as follows. Pore-forming toxin (PFT) that consists of a crown-shaped octamer or nonamer that forms cation-selective hydrophilic pores of about 1.5 nm (inside) and 13 nm (outside) and causes cytolysis. It causes cardiac stimulation. Also causes hemolysis (HC(50)=1.6 nM). Interestingly, the Phe-16 is crucial for hemolysis. Pore formation is a multi-step process that involves specific recognition of membrane sphingomyelin (but neither cholesterol nor phosphatidylcholine) using aromatic rich region and adjacent phosphocholine (POC) binding site, firm binding to the membrane (mainly driven by hydrophobic interactions) accompanied by the transfer of the N-terminal region to the lipid-water interface and finally pore formation after oligomerization of monomers. It is probable that a dimeric form is an assembly intermediate before the complete oligomerization. The formation of stable pores occurs only in vesicles composed of DOPC/SM (there is no oligomerization when the PFT is treated with vesicles of DOPC or SM alone). The transmembrane pore displays 8 lateral perforations, one at each subunit-subunit interface, partially occupied by the acyl-chain region of a bridging lipid. Each pore contains 24 lipid molecules, firmly bound to each subunit, that is, 3 lipids (L1, L2, L3, L4 and/or L5) are associated to each subunit. Lipid L1 bridges 2 subunits, whereas lipids L2 and L3 bind to sites at single subunit. In Actinia fragacea (Strawberry anemone), this protein is DELTA-actitoxin-Afr1e.